We begin with the raw amino-acid sequence, 384 residues long: tRNA-specific 2-thiouridylase MnmA (384 aa).

Positions 1-26 (MDEGIRASGGIRACQTGKQKQGRKRP) are disordered. Residues 36-43 (GMSGGVDS) and Met62 contribute to the ATP site. The interval 122 to 124 (NPD) is interaction with target base in tRNA. Cys127 (nucleophile) is an active-site residue. Cys127 and Cys223 are joined by a disulfide. Gly151 contributes to the ATP binding site. The tract at residues 173 to 175 (KDQ) is interaction with tRNA. The Cysteine persulfide intermediate role is filled by Cys223. The segment at 334–335 (RY) is interaction with tRNA.

Belongs to the MnmA/TRMU family.

The protein resides in the cytoplasm. It catalyses the reaction S-sulfanyl-L-cysteinyl-[protein] + uridine(34) in tRNA + AH2 + ATP = 2-thiouridine(34) in tRNA + L-cysteinyl-[protein] + A + AMP + diphosphate + H(+). Catalyzes the 2-thiolation of uridine at the wobble position (U34) of tRNA, leading to the formation of s(2)U34. In Chromobacterium violaceum (strain ATCC 12472 / DSM 30191 / JCM 1249 / CCUG 213 / NBRC 12614 / NCIMB 9131 / NCTC 9757 / MK), this protein is tRNA-specific 2-thiouridylase MnmA.